Here is a 468-residue protein sequence, read N- to C-terminus: Glutamate--tRNA ligase (468 aa).

Residues 12-22 (PSPTGFIHLGN) carry the 'HIGH' region motif. Residues 244 to 248 (KMSKR) carry the 'KMSKS' region motif. Lys-247 is a binding site for ATP.

It belongs to the class-I aminoacyl-tRNA synthetase family. Glutamate--tRNA ligase type 1 subfamily. In terms of assembly, monomer.

The protein localises to the cytoplasm. The enzyme catalyses tRNA(Glu) + L-glutamate + ATP = L-glutamyl-tRNA(Glu) + AMP + diphosphate. Its function is as follows. Catalyzes the attachment of glutamate to tRNA(Glu) in a two-step reaction: glutamate is first activated by ATP to form Glu-AMP and then transferred to the acceptor end of tRNA(Glu). This is Glutamate--tRNA ligase from Polynucleobacter asymbioticus (strain DSM 18221 / CIP 109841 / QLW-P1DMWA-1) (Polynucleobacter necessarius subsp. asymbioticus).